A 220-amino-acid polypeptide reads, in one-letter code: Probable chemoreceptor glutamine deamidase CheD 2 (220 aa).

Belongs to the CheD family.

The enzyme catalyses L-glutaminyl-[protein] + H2O = L-glutamyl-[protein] + NH4(+). Probably deamidates glutamine residues to glutamate on methyl-accepting chemotaxis receptors (MCPs), playing an important role in chemotaxis. The protein is Probable chemoreceptor glutamine deamidase CheD 2 of Methanosarcina acetivorans (strain ATCC 35395 / DSM 2834 / JCM 12185 / C2A).